The primary structure comprises 212 residues: Ropporin-1A (212 aa).

In terms of domain architecture, RIIa spans 12-49 (PELPKMLKEFAKAAIRVQPQDLIQWAADYFEALSRGET). Serine 56 is subject to Phosphoserine. The tract at residues 209 to 212 (VQLE) is interaction with RHPN1.

This sequence belongs to the ropporin family. Homodimer. Interacts with AKAP3 and RHPN1. May interact with SPA17. Interacts with FSCB; the interaction increases upon spermatozoa capacitation conditions. Interacts with CFAP61. In terms of processing, sumoylated, sumoylation decreases upon spermatozoa capacitation conditions. As to expression, testis specific in adult. Overexpressed in hematologic tumor cells.

It localises to the cell projection. It is found in the cilium. The protein localises to the flagellum. Important for male fertility. With ROPN1L, involved in fibrous sheath integrity and sperm motility, plays a role in PKA-dependent signaling processes required for spermatozoa capacitation. The chain is Ropporin-1A (ROPN1) from Homo sapiens (Human).